Consider the following 249-residue polypeptide: Phosphate import ATP-binding protein PstB 2 (249 aa).

Residues Phe4–Val244 enclose the ABC transporter domain. Gly36–Ser43 is an ATP binding site.

It belongs to the ABC transporter superfamily. Phosphate importer (TC 3.A.1.7) family. The complex is composed of two ATP-binding proteins (PstB), two transmembrane proteins (PstC and PstA) and a solute-binding protein (PstS).

It is found in the cell inner membrane. It catalyses the reaction phosphate(out) + ATP + H2O = ADP + 2 phosphate(in) + H(+). In terms of biological role, part of the ABC transporter complex PstSACB involved in phosphate import. Responsible for energy coupling to the transport system. This Shewanella oneidensis (strain ATCC 700550 / JCM 31522 / CIP 106686 / LMG 19005 / NCIMB 14063 / MR-1) protein is Phosphate import ATP-binding protein PstB 2.